The primary structure comprises 436 residues: Xylose isomerase (436 aa).

Mg(2+)-binding residues include Asp-306 and Asp-308.

This sequence belongs to the xylose isomerase family. As to quaternary structure, homotetramer. Mg(2+) is required as a cofactor.

It is found in the cytoplasm. It carries out the reaction alpha-D-xylose = alpha-D-xylulofuranose. The chain is Xylose isomerase from Sinorhizobium fredii (strain NBRC 101917 / NGR234).